A 152-amino-acid polypeptide reads, in one-letter code: Transcriptional regulator MraZ (152 aa).

SpoVT-AbrB domains lie at 5–52 (ASAI…PVQE) and 81–124 (AHEC…DEAA).

Belongs to the MraZ family. As to quaternary structure, forms oligomers.

It is found in the cytoplasm. The protein resides in the nucleoid. This is Transcriptional regulator MraZ from Shewanella piezotolerans (strain WP3 / JCM 13877).